The chain runs to 834 residues: MKLFQKIFGSYSQREVKRIMPIVDKIDALDSKVQALSNEQLRNKTDEFKERLDKGESLDSILPEAFAVVREVGFRTVGLKQYREQLIGGIVIHQGRIAEMKTGEGKTLVATAPAYLNALTGKGVHIVTVNDYLAKRDRDTMAPIYEALGLKVGVILHDMSQSQRQEAYNCDITYGTNSEFGFDYLRDNMVIYKEERVQRKLNFAIVDEVDSILIDEARTPLIISGEGEKSTEFYNIANGFAKSLEKEDYKVDEKANAVMLNDTGIKKAETFFSLENYADPENMEIQHYVVQALKANYIMKRDKDYMVKNGEVLIVDEFTGRMMEGRRYSDGLHQAIEAKEGVKVERESKTLATITYQNYFRIFNKLSGMTGTAQTEENEFRHIYGLDVIVVPTHKPIAREDFPDVVYKSAKGKFKAIADEIYETYKKGQPALVGTVSIEKSELLSDMLKRKGVPHQVLNAKFHEKEADIISYAGQKGTVTIATNMAGRGTDIKLGKGVVALGGLKIIGTERHESRRIDNQLRGRSGRQGDPGMSRFYVSLEDDLMRIFGSDRLQGIVEKLGLKDDEAIESKMVSNAIENAQKKVEGNNFDIRKTLLQYDDVINKQREIIYKQRSQVLEGEDLKNDVQDMIKSLINSIVDSHISGIEEEFEDEIVKLIEYMEDVYVPKDSVKKEDIINLSNEAIKDKFIDIAQKIYEQKEIEFTSEQMREIERVILLRVVDTRWMDHIDDMEHLKRAIGLRAYRQQEPAQAYQFEGSEMFEEMIYNIKLDTVKYLMHVQIERAPERERVVKNVITNQESDSIKKTPVKREKTVGRNDLCPCGSGKKYKNCCGRTV.

ATP-binding positions include Gln-85, 103-107 (GEGKT), and Asp-491. The Zn(2+) site is built by Cys-818, Cys-820, Cys-829, and Cys-830.

It belongs to the SecA family. As to quaternary structure, monomer and homodimer. Part of the essential Sec protein translocation apparatus which comprises SecA, SecYEG and auxiliary proteins SecDF. Other proteins may also be involved. It depends on Zn(2+) as a cofactor.

It localises to the cell membrane. Its subcellular location is the cytoplasm. The catalysed reaction is ATP + H2O + cellular proteinSide 1 = ADP + phosphate + cellular proteinSide 2.. Its function is as follows. Part of the Sec protein translocase complex. Interacts with the SecYEG preprotein conducting channel. Has a central role in coupling the hydrolysis of ATP to the transfer of proteins into and across the cell membrane, serving as an ATP-driven molecular motor driving the stepwise translocation of polypeptide chains across the membrane. The polypeptide is Protein translocase subunit SecA (Clostridium kluyveri (strain ATCC 8527 / DSM 555 / NBRC 12016 / NCIMB 10680 / K1)).